The chain runs to 359 residues: MRQSRRASSRVNRLVVIFIIVASGFLLLYKNTQQFTQIDRECIQDEWQENNNLGNTIDDGSNFRIAFTDIQQNYTWLHLPNFLENSEILMIVSSNCDNFARRNILRKTWMNPENSQIIGDGRMKALFLVGINGADEKLNAVVLEEAKVFGDMIVIDLEDNYLNLSYKTISLLLYSISKTKSPNLIGKIDEDVLFYPDQLTPLINDKTINTSTFSIYGEKYEAGVAVNHGEDNAKWQISKNSFKCSVYPSYLSGPTYFLTRKAAKRIVEATKHRKFISVDVEDVFITGLLAGDVGIKKNQLPFMYMIEEATNDRESYEILAWHTKKRDQQYIEAFESLKLNRCKSCRKSKNPDLEELKEK.

Over 1–11 (MRQSRRASSRV) the chain is Cytoplasmic. The helical; Signal-anchor for type II membrane protein transmembrane segment at 12–29 (NRLVVIFIIVASGFLLLY) threads the bilayer. The Lumenal segment spans residues 30 to 359 (KNTQQFTQID…NPDLEELKEK (330 aa)). N-linked (GlcNAc...) asparagine glycosylation is found at Asn-73, Asn-163, and Asn-209.

The protein belongs to the glycosyltransferase 31 family.

The protein localises to the golgi apparatus membrane. It participates in protein modification; protein glycosylation. Its function is as follows. Transfers N-acetylgalactosamine onto carbohydrate substrates. Involved in susceptibility to pore-forming crystal toxins in conjunction with bre-1, bre-3, bre-4, and bre-5. Involved in resistance to the nematotoxic C.cinerea galectin Cgl2. The protein is Beta-1,3-galactosyltransferase bre-2 of Caenorhabditis elegans.